A 397-amino-acid polypeptide reads, in one-letter code: Urea transporter 2 (397 aa).

5 helical membrane passes run 68–85, 92–109, 115–135, 143–163, and 172–192; these read VMFV…IGLF, AIAG…ALIL, AIAS…IAVF, WWLL…SSAL, and LPVF…ATGH. An N-linked (GlcNAc...) asparagine glycan is attached at N210. 5 helical membrane-spanning segments follow: residues 239-257, 264-280, 287-303, 309-329, and 331-351; these read WTGG…LICL, TMGM…FDSI, FNST…FYVI, LLAV…TNVL, and VFGL…FLLL.

Belongs to the urea transporter family. In terms of tissue distribution, kidney.

The protein resides in the apical cell membrane. Its subcellular location is the basolateral cell membrane. The catalysed reaction is urea(in) = urea(out). Inhibited by urea analogs and phloretin. In terms of biological role, mediates the transport of urea driven by a concentration gradient across the cell membrane of the renal inner medullary collecting duct which is critical to the urinary concentrating mechanism. The polypeptide is Urea transporter 2 (SLC14A2) (Oryctolagus cuniculus (Rabbit)).